We begin with the raw amino-acid sequence, 214 residues long: Orotate phosphoribosyltransferase (214 aa).

Position 26 (lysine 26) interacts with 5-phospho-alpha-D-ribose 1-diphosphate. 34–35 (FF) is an orotate binding site. 5-phospho-alpha-D-ribose 1-diphosphate-binding positions include 72–73 (YK), arginine 99, lysine 100, lysine 103, histidine 105, and 124–132 (DDVITAGTA). Residues threonine 128 and arginine 156 each coordinate orotate.

Belongs to the purine/pyrimidine phosphoribosyltransferase family. PyrE subfamily. As to quaternary structure, homodimer. Mg(2+) serves as cofactor.

The catalysed reaction is orotidine 5'-phosphate + diphosphate = orotate + 5-phospho-alpha-D-ribose 1-diphosphate. Its pathway is pyrimidine metabolism; UMP biosynthesis via de novo pathway; UMP from orotate: step 1/2. Catalyzes the transfer of a ribosyl phosphate group from 5-phosphoribose 1-diphosphate to orotate, leading to the formation of orotidine monophosphate (OMP). The sequence is that of Orotate phosphoribosyltransferase from Actinobacillus succinogenes (strain ATCC 55618 / DSM 22257 / CCUG 43843 / 130Z).